Consider the following 315-residue polypeptide: tRNA dimethylallyltransferase (315 aa).

An ATP-binding site is contributed by 13–20 (GPTAVGKT). Substrate is bound at residue 15–20 (TAVGKT). The interval 38–41 (DSRL) is interaction with substrate tRNA.

The protein belongs to the IPP transferase family. As to quaternary structure, monomer. It depends on Mg(2+) as a cofactor.

It catalyses the reaction adenosine(37) in tRNA + dimethylallyl diphosphate = N(6)-dimethylallyladenosine(37) in tRNA + diphosphate. Catalyzes the transfer of a dimethylallyl group onto the adenine at position 37 in tRNAs that read codons beginning with uridine, leading to the formation of N6-(dimethylallyl)adenosine (i(6)A). The sequence is that of tRNA dimethylallyltransferase from Herpetosiphon aurantiacus (strain ATCC 23779 / DSM 785 / 114-95).